A 311-amino-acid polypeptide reads, in one-letter code: MKKKIGLLVMAYGTPYKEEDIERYYTHIRRGRKPSPEMLEDLTERYRAIGGISPLATITLEQAKKLEKRLNEVQDEVEYHMYLGLKHIEPFIEDAVKEMHNDGIQDAIALVLAPHYSTFSVKSYVGRAQEEAEKLGNLTIHGIDSWYKEPKFIQYWVDAVKSIYSGMSDAEREKAVLIVSAHSLPEKIIAMGDPYPDQLNETADYIARGAEVANYAVGWQSAGNTPDPWIGPDVQDLTRELNEKYGYTSFVYAPVGFVAEHLEVLYDNDFECKVVTDEIGAKYYRPEMPNASDAFIDCLTDVVVKKKESVM.

Residues Tyr12, Arg29, 45-46, Ser53, and Tyr124 each bind Fe-coproporphyrin III; that span reads RY. Positions 182 and 263 each coordinate Fe(2+).

Belongs to the ferrochelatase family.

It is found in the cytoplasm. The catalysed reaction is Fe-coproporphyrin III + 2 H(+) = coproporphyrin III + Fe(2+). It participates in porphyrin-containing compound metabolism; protoheme biosynthesis. Its function is as follows. Involved in coproporphyrin-dependent heme b biosynthesis. Catalyzes the insertion of ferrous iron into coproporphyrin III to form Fe-coproporphyrin III. This is Coproporphyrin III ferrochelatase 1 from Bacillus anthracis.